Reading from the N-terminus, the 386-residue chain is Terpene cyclase 6 (386 aa).

Residues Asp128, Asn276, and Ser280 each contribute to the Mg(2+) site. Residues Asp128–Asp132 carry the D(D/E)XX(D/E) motif motif. The NSE motif motif lies at Asn276 to Glu284. A WxxxxxRY motif motif is present at residues Trp360–Tyr367. 2 residues coordinate (2E,6E)-farnesyl diphosphate: Arg366 and Tyr367.

Belongs to the terpene synthase family. Homodimer. It depends on Mg(2+) as a cofactor.

It carries out the reaction (2E,6E)-farnesyl diphosphate + H2O = trichobrasilenol + diphosphate. It catalyses the reaction (2E,6E)-farnesyl diphosphate = alpha-humulene + diphosphate. The enzyme catalyses (2E,6E)-farnesyl diphosphate = (-)-(E)-beta-caryophyllene + diphosphate. The catalysed reaction is (2E,6E)-farnesyl diphosphate = (E)-2-epi-beta-caryophyllene + diphosphate. It carries out the reaction (2E,6E)-farnesyl diphosphate + H2O = (+)-isoafricanol + diphosphate. It catalyses the reaction (2E,6E)-farnesyl diphosphate + H2O = (+)-(2S,3R,9R)-pristinol + diphosphate. The enzyme catalyses (2E,6E)-farnesyl diphosphate = african-3-ene + diphosphate. The catalysed reaction is (2E,6E)-farnesyl diphosphate = african-1-ene + diphosphate. It functions in the pathway sesquiterpene biosynthesis. Its function is as follows. Terpene cyclase that is able to convert FPP into a mixture of sesquiterpene hydrocarbons and alcohols. The main product is trichobrasilenol. Additionally, side products include alpha-humulene, caryophyllene, 2-epi-caryophyllene, african-3-ene, african-1-ene, isoafricanol and pristinol. Does not accept GPP, GGPP, and GFPP as substrates. The polypeptide is Terpene cyclase 6 (Hypocrea atroviridis (Trichoderma atroviride)).